A 283-amino-acid polypeptide reads, in one-letter code: Formamidopyrimidine-DNA glycosylase (283 aa).

The Schiff-base intermediate with DNA role is filled by proline 2. Residue glutamate 3 is the Proton donor of the active site. Lysine 60 (proton donor; for beta-elimination activity) is an active-site residue. Positions 100, 119, and 164 each coordinate DNA. An FPG-type zinc finger spans residues tryptophan 249–lysine 283. Residue arginine 273 is the Proton donor; for delta-elimination activity of the active site.

This sequence belongs to the FPG family. In terms of assembly, monomer. Requires Zn(2+) as cofactor.

The catalysed reaction is Hydrolysis of DNA containing ring-opened 7-methylguanine residues, releasing 2,6-diamino-4-hydroxy-5-(N-methyl)formamidopyrimidine.. It carries out the reaction 2'-deoxyribonucleotide-(2'-deoxyribose 5'-phosphate)-2'-deoxyribonucleotide-DNA = a 3'-end 2'-deoxyribonucleotide-(2,3-dehydro-2,3-deoxyribose 5'-phosphate)-DNA + a 5'-end 5'-phospho-2'-deoxyribonucleoside-DNA + H(+). In terms of biological role, involved in base excision repair of DNA damaged by oxidation or by mutagenic agents. Acts as a DNA glycosylase that recognizes and removes damaged bases. Has a preference for oxidized purines, such as 7,8-dihydro-8-oxoguanine (8-oxoG). Has AP (apurinic/apyrimidinic) lyase activity and introduces nicks in the DNA strand. Cleaves the DNA backbone by beta-delta elimination to generate a single-strand break at the site of the removed base with both 3'- and 5'-phosphates. This Prochlorococcus marinus (strain SARG / CCMP1375 / SS120) protein is Formamidopyrimidine-DNA glycosylase.